Here is a 178-residue protein sequence, read N- to C-terminus: MVRGLFPGRFQPPHWGHIYAVKEILKEVDEVIIAMGSAQFNYLLKDPFTAGERIWMLREGLREGGVDLSRVVIIPIPNVENNLEWLGRVKSYTPPFDVIYTGNPFVALLFREAGYEVRQQPMFQRERYSSTRVRELLLRGDPSWEELVPKSVAEIIKKLRGAERIKTAASGEAEPHKW.

Belongs to the archaeal NMN adenylyltransferase family.

Its subcellular location is the cytoplasm. It catalyses the reaction beta-nicotinamide D-ribonucleotide + ATP + H(+) = diphosphate + NAD(+). It participates in cofactor biosynthesis; NAD(+) biosynthesis; NAD(+) from nicotinamide D-ribonucleotide: step 1/1. In Pyrobaculum arsenaticum (strain DSM 13514 / JCM 11321 / PZ6), this protein is Nicotinamide-nucleotide adenylyltransferase.